Reading from the N-terminus, the 355-residue chain is Homoserine O-succinyltransferase (355 aa).

Residue C146 is the Acyl-thioester intermediate of the active site. 2 residues coordinate substrate: K167 and S196. The active-site Proton acceptor is the H239. Residue E241 is part of the active site. Position 253 (R253) interacts with substrate.

The protein belongs to the MetA family.

It localises to the cytoplasm. The catalysed reaction is L-homoserine + succinyl-CoA = O-succinyl-L-homoserine + CoA. It functions in the pathway amino-acid biosynthesis; L-methionine biosynthesis via de novo pathway; O-succinyl-L-homoserine from L-homoserine: step 1/1. Its function is as follows. Transfers a succinyl group from succinyl-CoA to L-homoserine, forming succinyl-L-homoserine. In Methylococcus capsulatus (strain ATCC 33009 / NCIMB 11132 / Bath), this protein is Homoserine O-succinyltransferase.